Here is a 326-residue protein sequence, read N- to C-terminus: Meiotically up-regulated gene 113 protein (326 aa).

The protein resides in the cytoplasm. Its function is as follows. Has a role in meiosis. In Schizosaccharomyces pombe (strain 972 / ATCC 24843) (Fission yeast), this protein is Meiotically up-regulated gene 113 protein (mug113).